A 444-amino-acid polypeptide reads, in one-letter code: Tol-Pal system protein TolB (444 aa).

A signal peptide spans 1–19; it reads MRNIIYFILSLLFSVTSYA.

This sequence belongs to the TolB family. As to quaternary structure, the Tol-Pal system is composed of five core proteins: the inner membrane proteins TolA, TolQ and TolR, the periplasmic protein TolB and the outer membrane protein Pal. They form a network linking the inner and outer membranes and the peptidoglycan layer.

It localises to the periplasm. Its function is as follows. Part of the Tol-Pal system, which plays a role in outer membrane invagination during cell division and is important for maintaining outer membrane integrity. The protein is Tol-Pal system protein TolB of Rickettsia peacockii (strain Rustic).